We begin with the raw amino-acid sequence, 340 residues long: Maltose epimerase (340 aa).

Arg79 is a binding site for substrate. His178 (proton donor) is an active-site residue. Asp247 contacts substrate. Glu305 serves as the catalytic Proton acceptor.

This sequence belongs to the aldose epimerase family.

It carries out the reaction alpha-maltose = beta-maltose. Its pathway is carbohydrate metabolism; hexose metabolism. Its function is as follows. Catalyzes the interconversion of alpha and beta anomers of maltose. This Levilactobacillus brevis (strain ATCC 367 / BCRC 12310 / CIP 105137 / JCM 1170 / LMG 11437 / NCIMB 947 / NCTC 947) (Lactobacillus brevis) protein is Maltose epimerase.